A 156-amino-acid polypeptide reads, in one-letter code: MKFNDVYNKHQKIIHYLLKKYNISYNYDEYYQLLLIKMWQLSQIYKPSSKQSLSSFLFTRLNFYLIDLFRQQNQLKDVILCENNSPTLTEQPTYFNEHDLRLQDIFKLLNQRERLWLKLYLEGYKQFEIAEIMSLSLSTIKLIKMSVKRKCQHNFN.

The short motif at 29–44 (EYYQLLLIKMWQLSQI) is the Polymerase core binding element. The segment at residues 126–145 (QFEIAEIMSLSLSTIKLIKM) is a DNA-binding region (H-T-H motif).

It belongs to the sigma-70 factor family.

Sigma factors are initiation factors that promote the attachment of RNA polymerase to specific initiation sites and are then released. Sigma-S contributes to the protection against external stress, thus playing a role in cellular fitness and survival. The protein is RNA polymerase sigma factor SigS (sigS) of Staphylococcus aureus (strain NCTC 8325 / PS 47).